The following is a 126-amino-acid chain: Glycine cleavage system H protein (126 aa).

In terms of domain architecture, Lipoyl-binding spans 24 to 105; the sequence is TLTVGITDHA…AYGVWLFKIK (82 aa). Lys-65 carries the N6-lipoyllysine modification.

Belongs to the GcvH family. In terms of assembly, the glycine cleavage system is composed of four proteins: P, T, L and H. It depends on (R)-lipoate as a cofactor.

Functionally, the glycine cleavage system catalyzes the degradation of glycine. The H protein shuttles the methylamine group of glycine from the P protein to the T protein. The protein is Glycine cleavage system H protein of Burkholderia ambifaria (strain MC40-6).